Consider the following 104-residue polypeptide: ATP-dependent Clp protease adapter protein ClpS (104 aa).

The disordered stretch occupies residues 1–20 (MSPDPHEDLGDVLTEPTQKT).

Belongs to the ClpS family. In terms of assembly, binds to the N-terminal domain of the chaperone ClpA.

Its function is as follows. Involved in the modulation of the specificity of the ClpAP-mediated ATP-dependent protein degradation. The sequence is that of ATP-dependent Clp protease adapter protein ClpS from Desulfatibacillum aliphaticivorans.